Consider the following 198-residue polypeptide: MNKIFGVKIDSQQKKRQQSNKNLTVFNNGRYLIYIGDIHFDRKFHREALRYYLLGCGLETAFYSDPVKTSVTNSKYLTFLSRRIFDCFYFLRAPMQAIVVSQFFGNLNQTCLVSFKIIQEEYYQLDTNYFQYIWELPLLEILLTTFTKQKDLKKIYLINQIISNPIINENNHPDIRKNFIKNTKHNFWKAISSNYLLQ.

It belongs to the Integrator subunit 8 family. Component of the Integrator complex. The core complex associates with protein phosphatase 2A subunits, to form the Integrator-PP2A (INTAC) complex.

It localises to the nucleus. It is found in the chromosome. Its function is as follows. Component of the integrator complex, a multiprotein complex that terminates RNA polymerase II (Pol II) transcription in the promoter-proximal region of genes. The integrator complex provides a quality checkpoint during transcription elongation by driving premature transcription termination of transcripts that are unfavorably configured for transcriptional elongation: the complex terminates transcription by (1) catalyzing dephosphorylation of the C-terminal domain (CTD) of Pol II subunit polr2a, (2) degrading the exiting nascent RNA transcript via endonuclease activity and (3) promoting the release of Pol II from bound DNA. The integrator complex is also involved in terminating the synthesis of non-coding Pol II transcripts, such as enhancer RNAs (eRNAs), small nuclear RNAs (snRNAs), telomerase RNAs and long non-coding RNAs (lncRNAs). Within the integrator complex, INTS8 is required for the recruitment of protein phosphatase 2A (PP2A) to transcription pause-release checkpoint. This chain is Integrator complex subunit 8-like protein, found in Dictyostelium discoideum (Social amoeba).